We begin with the raw amino-acid sequence, 711 residues long: Methionine--tRNA ligase (711 aa).

The short motif at 15–25 (PYTNGPIHIGH) is the 'HIGH' region element. Zn(2+) is bound by residues C147, C150, C160, and C163. A 'KMSKS' region motif is present at residues 336 to 340 (KLSTS). T339 provides a ligand contact to ATP. The 102-residue stretch at 610–711 (DFAKMDIRIG…ADAPNGATVN (102 aa)) folds into the tRNA-binding domain.

This sequence belongs to the class-I aminoacyl-tRNA synthetase family. MetG type 1 subfamily. In terms of assembly, homodimer. It depends on Zn(2+) as a cofactor.

The protein resides in the cytoplasm. The enzyme catalyses tRNA(Met) + L-methionine + ATP = L-methionyl-tRNA(Met) + AMP + diphosphate. In terms of biological role, is required not only for elongation of protein synthesis but also for the initiation of all mRNA translation through initiator tRNA(fMet) aminoacylation. This Flavobacterium johnsoniae (strain ATCC 17061 / DSM 2064 / JCM 8514 / BCRC 14874 / CCUG 350202 / NBRC 14942 / NCIMB 11054 / UW101) (Cytophaga johnsonae) protein is Methionine--tRNA ligase.